A 141-amino-acid chain; its full sequence is Nucleoside triphosphatase NudI (141 aa).

The region spanning M1–L141 is the Nudix hydrolase domain. The short motif at G38 to G59 is the Nudix box element.

Belongs to the Nudix hydrolase family. NudI subfamily. As to quaternary structure, monomer. It depends on Mg(2+) as a cofactor.

The enzyme catalyses a ribonucleoside 5'-triphosphate + H2O = a ribonucleoside 5'-phosphate + diphosphate + H(+). It catalyses the reaction a 2'-deoxyribonucleoside 5'-triphosphate + H2O = a 2'-deoxyribonucleoside 5'-phosphate + diphosphate + H(+). The catalysed reaction is dUTP + H2O = dUMP + diphosphate + H(+). It carries out the reaction dTTP + H2O = dTMP + diphosphate + H(+). The enzyme catalyses dCTP + H2O = dCMP + diphosphate + H(+). Catalyzes the hydrolysis of nucleoside triphosphates, with a preference for pyrimidine deoxynucleoside triphosphates (dUTP, dTTP and dCTP). This chain is Nucleoside triphosphatase NudI, found in Salmonella paratyphi B (strain ATCC BAA-1250 / SPB7).